Reading from the N-terminus, the 508-residue chain is Alpha-amylase (508 aa).

The signal sequence occupies residues 1–19 (MLSLIIAACCVTVALAGTF). A disulfide bridge links Cys-46 with Cys-102. Ca(2+)-binding residues include Asn-116, Arg-173, and Asp-182. Cys-156 and Cys-175 form a disulfide bridge. Chloride is bound at residue Arg-210. The active-site Nucleophile is Asp-212. His-216 provides a ligand contact to Ca(2+). The active-site Proton donor is the Glu-248. 2 residues coordinate chloride: Asn-311 and Arg-349. 2 disulfide bridges follow: Cys-383–Cys-389 and Cys-455–Cys-467.

This sequence belongs to the glycosyl hydrolase 13 family. As to quaternary structure, monomer. It depends on Ca(2+) as a cofactor. Requires chloride as cofactor.

It catalyses the reaction Endohydrolysis of (1-&gt;4)-alpha-D-glucosidic linkages in polysaccharides containing three or more (1-&gt;4)-alpha-linked D-glucose units.. The polypeptide is Alpha-amylase (Pecten maximus (King scallop)).